We begin with the raw amino-acid sequence, 582 residues long: Vacuolar basic amino acid transporter 5 (582 aa).

Residues 1–44 (MEETKYSSQQEIEGACGSDASLNARGSNDSPMGLSLYLCLASLT) lie on the Cytoplasmic side of the membrane. Residues 45-65 (LVLFITALDILIVGTIIDVVA) traverse the membrane as a helical segment. The Vacuolar segment spans residues 66 to 80 (EQFGNYSKTGWLVTG). A glycan (N-linked (GlcNAc...) asparagine) is linked at asparagine 70. The helical transmembrane segment at 81 to 101 (YSLPNAILSLIWGRFASIIGF) threads the bilayer. The Cytoplasmic segment spans residues 102-104 (QHS). A helical transmembrane segment spans residues 105 to 125 (LILAILIFEAGSLIAALASSM). Over 126–132 (NMLIFGR) the chain is Vacuolar. The helical transmembrane segment at 133–153 (VVAGVGGSGLQTLCFVIGCTM) threads the bilayer. The Cytoplasmic segment spans residues 154–160 (VGERSRP). A helical transmembrane segment spans residues 161 to 181 (LVISILSCAFAVAAIVGPIIG). Residues 182 to 191 (GAFTTHVTWR) are Vacuolar-facing. Residues 192 to 212 (WCFYINLPIGGLAIIMFLLTY) traverse the membrane as a helical segment. Residues 213-256 (KAENKGILQQIKDAIGTISSFTFSKFRHQVNFKRLMNGIIFKFD) lie on the Cytoplasmic side of the membrane. The helical transmembrane segment at 257-277 (FFGFALCSAGLVLFLLGLTFG) threads the bilayer. The Vacuolar segment spans residues 278 to 287 (GNKYSWNSGQ). The helical transmembrane segment at 288–308 (VITYLVLGVLLFIFSLVYDFF) threads the bilayer. Residues 309–329 (LFDKFNPEPDNISYRPLLLRR) are Cytoplasmic-facing. Residues 330-350 (LVAKPAIIIVNMVTFLLCTGY) traverse the membrane as a helical segment. Residues 351 to 372 (NGQMIYSVQFFQLIFASSAWKA) lie on the Vacuolar side of the membrane. Residues 373 to 393 (GLHLIPIVITNVIAAIASGVI) form a helical membrane-spanning segment. Residues 394–401 (TKKLGLVK) are Cytoplasmic-facing. A helical transmembrane segment spans residues 402 to 422 (PLLIFGGVLGVIGAGLMTLMT). Residue asparagine 423 is glycosylated (N-linked (GlcNAc...) asparagine). At 423 to 430 (NTSTKSTQ) the chain is on the vacuolar side. Residues 431–451 (IGVLLLPGFSLGFALQASLMS) form a helical membrane-spanning segment. At 452 to 469 (AQLQITKDRPEAAMDFIE) the chain is on the cytoplasmic side. A helical transmembrane segment spans residues 470 to 492 (VTAFNTFMKSLGTTLGGVLSTTV). Over 493–539 (FSASFHNKVSRAHLEPYEGKTVDDMILYRLQNYDGSHSTIGNILSDS) the chain is Vacuolar. A helical transmembrane segment spans residues 540-560 (IKNVFWMDLGFYALGFLFCSF). The Cytoplasmic portion of the chain corresponds to 561–582 (SSNKKLIIPKKDDTPEDNLEDK).

The protein belongs to the major facilitator superfamily.

The protein resides in the vacuole membrane. In terms of biological role, transporter required for vacuolar uptake of basic amino acids. This is Vacuolar basic amino acid transporter 5 (VBA5) from Saccharomyces cerevisiae (strain ATCC 204508 / S288c) (Baker's yeast).